The sequence spans 335 residues: Beta-ketoacyl-[acyl-carrier-protein] synthase III 3 (335 aa).

Catalysis depends on residues Cys-114 and His-256. The segment at 257–261 (QANHR) is ACP-binding. Asn-286 is a catalytic residue.

It belongs to the thiolase-like superfamily. FabH family. As to quaternary structure, homodimer.

It localises to the cytoplasm. The enzyme catalyses malonyl-[ACP] + acetyl-CoA + H(+) = 3-oxobutanoyl-[ACP] + CO2 + CoA. The protein operates within lipid metabolism; fatty acid biosynthesis. Its function is as follows. Catalyzes the condensation reaction of fatty acid synthesis by the addition to an acyl acceptor of two carbons from malonyl-ACP. Catalyzes the first condensation reaction which initiates fatty acid synthesis and may therefore play a role in governing the total rate of fatty acid production. Possesses both acetoacetyl-ACP synthase and acetyl transacylase activities. Its substrate specificity determines the biosynthesis of branched-chain and/or straight-chain of fatty acids. In Streptomyces coelicolor (strain ATCC BAA-471 / A3(2) / M145), this protein is Beta-ketoacyl-[acyl-carrier-protein] synthase III 3.